Here is a 349-residue protein sequence, read N- to C-terminus: Protein-glutamate methylesterase/protein-glutamine glutaminase 2 (349 aa).

The 118-residue stretch at 4–121 (SVLVVDDSAL…AEGMQAYAEE (118 aa)) folds into the Response regulatory domain. Asp55 is modified (4-aspartylphosphate). The CheB-type methylesterase domain occupies 151–343 (LLSTEKIIAL…AALLQQAARR (193 aa)). Residues Ser163, His189, and Asp285 contribute to the active site.

Belongs to the CheB family. In terms of assembly, interacts with the C-terminal pentapeptide GWEEF of McpB. Post-translationally, phosphorylated by CheA. Phosphorylation of the N-terminal regulatory domain activates the methylesterase activity.

Its subcellular location is the cytoplasm. The enzyme catalyses [protein]-L-glutamate 5-O-methyl ester + H2O = L-glutamyl-[protein] + methanol + H(+). The catalysed reaction is L-glutaminyl-[protein] + H2O = L-glutamyl-[protein] + NH4(+). Functionally, involved in chemotaxis. Part of a chemotaxis signal transduction system that modulates chemotaxis in response to various stimuli. Catalyzes the demethylation of specific methylglutamate residues introduced into the chemoreceptors (methyl-accepting chemotaxis proteins or MCP) by CheR. Also mediates the irreversible deamidation of specific glutamine residues to glutamic acid. Acts on the methyl-accepting chemotaxis protein McpB. May be involved in a specific chemotactic response, which takes place during infection and is required for P.aeruginosa pathogenicity. In Pseudomonas aeruginosa (strain ATCC 15692 / DSM 22644 / CIP 104116 / JCM 14847 / LMG 12228 / 1C / PRS 101 / PAO1), this protein is Protein-glutamate methylesterase/protein-glutamine glutaminase 2.